The following is a 99-amino-acid chain: Putative GIY-YIG domain-containing protein 242L (99 aa).

One can recognise a GIY-YIG domain in the interval 5 to 81 (NGWNIYMVTM…KKQTKKVKLQ (77 aa)).

In Invertebrate iridescent virus 6 (IIV-6), this protein is Putative GIY-YIG domain-containing protein 242L.